A 421-amino-acid polypeptide reads, in one-letter code: NADH-quinone oxidoreductase subunit F (421 aa).

Position 54 to 63 (54 to 63 (GRGGAGFSTG)) interacts with NAD(+). 166–213 (GAGAYICGEETALLESLEGKKGMPRLKPPFPAGFGLYGCPTTINNVES) serves as a coordination point for FMN. Residues C344, C347, C350, and C390 each contribute to the [4Fe-4S] cluster site.

This sequence belongs to the complex I 51 kDa subunit family. Requires FMN as cofactor. The cofactor is [4Fe-4S] cluster.

It catalyses the reaction a quinone + NADH + 5 H(+)(in) = a quinol + NAD(+) + 4 H(+)(out). In terms of biological role, NDH-1 shuttles electrons from NADH, via FMN and iron-sulfur (Fe-S) centers, to quinones in the respiratory chain. Couples the redox reaction to proton translocation (for every two electrons transferred, four hydrogen ions are translocated across the cytoplasmic membrane), and thus conserves the redox energy in a proton gradient. The sequence is that of NADH-quinone oxidoreductase subunit F (nuoF) from Rickettsia rickettsii (strain Sheila Smith).